The primary structure comprises 283 residues: Elongation factor Ts (283 aa).

Positions 80–83 (TDFV) are involved in Mg(2+) ion dislocation from EF-Tu.

The protein belongs to the EF-Ts family.

Its subcellular location is the cytoplasm. In terms of biological role, associates with the EF-Tu.GDP complex and induces the exchange of GDP to GTP. It remains bound to the aminoacyl-tRNA.EF-Tu.GTP complex up to the GTP hydrolysis stage on the ribosome. This is Elongation factor Ts from Klebsiella pneumoniae (strain 342).